Reading from the N-terminus, the 297-residue chain is Protein phosphatase PTC7 homolog (297 aa).

Residues 1-27 constitute a mitochondrion transit peptide; it reads MFSVLSCGRLVARAVFGGLSQTDSRDY. The 265-residue stretch at 28-292 folds into the PPM-type phosphatase domain; it reads SLVTASCGFG…DDITVLLSIV (265 aa). Mn(2+) is bound by residues aspartate 71, glycine 72, and aspartate 216.

It belongs to the PP2C family. Mg(2+) serves as cofactor. Mn(2+) is required as a cofactor.

The protein localises to the mitochondrion matrix. It catalyses the reaction O-phospho-L-seryl-[protein] + H2O = L-seryl-[protein] + phosphate. The enzyme catalyses O-phospho-L-threonyl-[protein] + H2O = L-threonyl-[protein] + phosphate. In terms of biological role, protein phosphatase which positively regulates biosynthesis of the ubiquinone, coenzyme Q. Dephosphorylates the ubiquinone biosynthesis protein coq7 which is likely to lead to its activation. The polypeptide is Protein phosphatase PTC7 homolog (pptc7) (Xenopus laevis (African clawed frog)).